The sequence spans 72 residues: MAKEDNIEMQGTVLETLPNTMFRVELENGHVVTAHISGKMRKNYIRILTGDKVTVELTPYDLSKGRIVFRSR.

Positions 1–72 constitute an S1-like domain; the sequence is MAKEDNIEMQ…SKGRIVFRSR (72 aa).

The protein belongs to the IF-1 family. In terms of assembly, component of the 30S ribosomal translation pre-initiation complex which assembles on the 30S ribosome in the order IF-2 and IF-3, IF-1 and N-formylmethionyl-tRNA(fMet); mRNA recruitment can occur at any time during PIC assembly.

The protein localises to the cytoplasm. One of the essential components for the initiation of protein synthesis. Stabilizes the binding of IF-2 and IF-3 on the 30S subunit to which N-formylmethionyl-tRNA(fMet) subsequently binds. Helps modulate mRNA selection, yielding the 30S pre-initiation complex (PIC). Upon addition of the 50S ribosomal subunit IF-1, IF-2 and IF-3 are released leaving the mature 70S translation initiation complex. This chain is Translation initiation factor IF-1, found in Klebsiella pneumoniae subsp. pneumoniae (strain ATCC 700721 / MGH 78578).